A 560-amino-acid polypeptide reads, in one-letter code: Leiomodin-3 (560 aa).

An interaction with tropomyosin alpha region spans residues 1–49 (MSEHSRNSDQEELLDEEINEDEILANLSAEELKELQSEMEVMAPDPSLP). A coiled-coil region spans residues 16–42 (EEINEDEILANLSAEELKELQSEMEVM). 2 disordered regions span residues 45 to 68 (DPSLPVGMIQKDQTDKPPTGNFNH) and 127 to 217 (IVAN…SKLD). A compositionally biased stretch (acidic residues) spans 142 to 167 (ETDEEDEEEEDDDDDDEGEDDGEESE). Residues 168 to 182 (ETNREEEGKAKEQIR) are compositionally biased toward basic and acidic residues. Over residues 183–192 (NCENNCQQVT) the composition is skewed to polar residues. Residues 194 to 217 (KAFKEQRDRPEAQEQSEKKISKLD) are compositionally biased toward basic and acidic residues. The stretch at 386-425 (VTNLLTRNQDKQRQKRQEEQKQQQLKEQKKLIAMLENGLG) forms a coiled coil. Disordered stretches follow at residues 437 to 480 (PKPD…KYRT) and 494 to 530 (QRKSRMPEAREPPEKTNLKDVIKTLKPVPRNRPPPLV). Pro residues predominate over residues 448-458 (QPPPPRPPNPQ). Basic and acidic residues predominate over residues 498–516 (RMPEAREPPEKTNLKDVIK). One can recognise a WH2 domain in the interval 534–553 (PRDQLLNDIRHSSVAYLKPV).

Belongs to the tropomodulin family. In terms of assembly, may interact with tropomyosin alpha (TPM1/2) N-terminus. Interacts with KLHL40; leading to stabilization. In terms of processing, ubiquitinated, leading to its degradation. Interaction with KLHL40 negatively regulates ubiquitination and degradation. Expressed in cardiac and at higher levels in skeletal muscles (at protein level).

It localises to the cytoplasm. Its subcellular location is the myofibril. It is found in the sarcomere. The protein resides in the m line. The protein localises to the a band. It localises to the cytoskeleton. Essential for the organization of sarcomeric actin thin filaments in skeletal muscle. Increases the rate of actin polymerization. The protein is Leiomodin-3 (LMOD3) of Homo sapiens (Human).